We begin with the raw amino-acid sequence, 564 residues long: Probable metalloprotease ARX1 (564 aa).

This sequence belongs to the peptidase M24 family. Component of the nucleoplasmic and cytoplasmic pre-60S ribosomal particles.

It is found in the cytoplasm. It localises to the nucleus. Its function is as follows. Probable metalloprotease involved in proper assembly of pre-ribosomal particles during the biogenesis of the 60S ribosomal subunit. Accompanies the pre-60S particles to the cytoplasm. The polypeptide is Probable metalloprotease ARX1 (ARX1) (Candida albicans (strain SC5314 / ATCC MYA-2876) (Yeast)).